The sequence spans 521 residues: MSL complex subunit 3 (521 aa).

In terms of domain architecture, Tudor-knot spans 13-71 (SGEKVLCFEPDPTKARVLYDAKIVDVIVGKDEKGRKIPEYLIHFNGWNRSWDRWAAEDH). 2 disordered regions span residues 114 to 166 (KGLP…TRRE) and 298 to 409 (ATST…PSKE). A compositionally biased stretch (acidic residues) spans 139-149 (KDEEISEESDI). Over residues 150–166 (EEKTEVKEEPELQTRRE) the composition is skewed to basic and acidic residues. The 350-residue stretch at 168–517 (EERTITIEIP…CEAHYSTKNP (350 aa)) folds into the MRG domain. The segment at 290–440 (FFLPIKESAT…WKLVPDNYPP (151 aa)) is required for the histone acetyltransferase activity of the MSL complex. 2 positions are modified to phosphoserine: S309 and S311. Positions 316-329 (NPSTPQSTESQPTT) are enriched in low complexity. Residues S367 and S400 each carry the phosphoserine modification. Residue T405 is modified to Phosphothreonine. Phosphoserine occurs at positions 407 and 411.

As to quaternary structure, component of the MSL histone acetyltransferase complex at least composed of the KAT8/MOF, MSL1/hampin, MSL2 and MSL3. Interacts (via the MRG domain) with MSL1 and KAT8/MOF. Expressed in many tissues including liver, pancreas, heart, lung, kidney, skeletal muscle, brain, and placenta, with highest expression in skeletal muscle and heart.

The protein resides in the nucleus. Functionally, non-catalytic component of the MSL histone acetyltransferase complex, a multiprotein complex that mediates the majority of histone H4 acetylation at 'Lys-16' (H4K16ac), an epigenetic mark that prevents chromatin compaction. The MSL complex is required for chromosome stability and genome integrity by maintaining homeostatic levels of H4K16ac. The MSL complex is also involved in gene dosage by promoting up-regulation of genes expressed by the X chromosome. X up-regulation is required to compensate for autosomal biallelic expression. The MSL complex also participates in gene dosage compensation by promoting expression of Tsix non-coding RNA. Acts as a histone reader that specifically recognizes and binds histone H4 monomethylated at 'Lys-20' (H4K20Me1) in a DNA-dependent manner and is proposed to be involved in chromosomal targeting of the MSL complex. May play a role X inactivation in females. In Homo sapiens (Human), this protein is MSL complex subunit 3.